The chain runs to 162 residues: MERTIDPGTLPYRPCVGIVLINREGLIFAGQRIDSPVPAWQMPQGGIDEGEKPREAALRELWEETGIPAERVEFVAKAPDWVTYDLPPELLGRVWGGKYRGQRQKWFLYRYLGTDDEVGIGTDHAEFSCWRWIGAEEMVAAIVPFKRAVYEEVVATFRPHLA.

A Nudix hydrolase domain is found at 11–155 (PYRPCVGIVL…KRAVYEEVVA (145 aa)). The short motif at 45 to 66 (GGIDEGEKPREAALRELWEETG) is the Nudix box element.

It belongs to the Nudix hydrolase family. RppH subfamily. Requires a divalent metal cation as cofactor.

In terms of biological role, accelerates the degradation of transcripts by removing pyrophosphate from the 5'-end of triphosphorylated RNA, leading to a more labile monophosphorylated state that can stimulate subsequent ribonuclease cleavage. The chain is RNA pyrophosphohydrolase from Cereibacter sphaeroides (strain ATCC 17029 / ATH 2.4.9) (Rhodobacter sphaeroides).